Here is a 172-residue protein sequence, read N- to C-terminus: MSLPNPADLIRQMAVDLRAHLARRGITEPRYIGIRTGGVWVAQALQQELGDTSPLGTLDVSFYRDDFSQNGLHPQVRPSELPFEVEGQHLVLIDDVLMSGRTIRAALNELFDYGRPASVTLVCLLDLDAGELPIRPNVLGATLSLAAHERVKLTGPAPLALERQDLATASAL.

The PRPP-binding motif lies at L90–T102.

This sequence belongs to the purine/pyrimidine phosphoribosyltransferase family. PyrR subfamily.

It carries out the reaction UMP + diphosphate = 5-phospho-alpha-D-ribose 1-diphosphate + uracil. In terms of biological role, regulates the transcription of the pyrimidine nucleotide (pyr) operon in response to exogenous pyrimidines. Also displays a weak uracil phosphoribosyltransferase activity which is not physiologically significant. The polypeptide is Bifunctional protein PyrR (Pseudomonas putida (strain W619)).